We begin with the raw amino-acid sequence, 670 residues long: Solute carrier organic anion transporter family member 1A3 (670 aa).

Over 1–20 the chain is Cytoplasmic; that stretch reads MGDLEKGAATHGAGCFAKIK. Residues 21–40 form a helical membrane-spanning segment; it reads VFLMALTCAYVSKSLSGTFM. Residues 41–59 lie on the Extracellular side of the membrane; that stretch reads SSMLTQIERQFGIPTAIVG. The helical transmembrane segment at 60–80 threads the bilayer; it reads FINGSFEIGNLLLIIFVSYFG. At 81–86 the chain is on the cytoplasmic side; that stretch reads MKLHRP. Residues 87 to 111 traverse the membrane as a helical segment; sequence IVIGVGCAVMGLGCFIISLPHFLMG. Topologically, residues 112-155 are extracellular; sequence RYEYETTILPTSNLSSNSFLCMENQTQTLNPAQDPAECVKEVKS. 2 N-linked (GlcNAc...) asparagine glycosylation sites follow: N124 and N135. Residues 156–184 form a helical membrane-spanning segment; it reads LMWIYVLVGNIIRGIGETPIMPLGVSYIE. At 185-203 the chain is on the cytoplasmic side; that stretch reads NFAKSENSPLYIGILETGK. The helical transmembrane segment at 204 to 224 threads the bilayer; that stretch reads MIGPIFGLLLGSFCASIYVDT. The Extracellular portion of the chain corresponds to 225–242; it reads GSVNTDDLTITPTDIRWV. The helical transmembrane segment at 243–267 threads the bilayer; the sequence is GAWWIGFLVCAGVNILISIPFFFFP. Residues 268 to 311 lie on the Cytoplasmic side of the membrane; the sequence is KTLPKEGLQENVDGTENAKEESTEKRPRKKNRGITKDFFPFLKS. The tract at residues 277-296 is disordered; that stretch reads ENVDGTENAKEESTEKRPRK. Positions 283 to 292 are enriched in basic and acidic residues; that stretch reads ENAKEESTEK. Residues 312–333 traverse the membrane as a helical segment; that stretch reads PVLQPDLHAVHPYKVLQVNAFN. Residues 334-353 are Extracellular-facing; the sequence is IYFSFLPKYLENQYGKSTAE. The helical transmembrane segment at 354–377 threads the bilayer; the sequence is VIFLMGVYNLPAICIGYLIAGFMM. The Cytoplasmic portion of the chain corresponds to 378 to 381; sequence KKFK. A helical transmembrane segment spans residues 382 to 405; that stretch reads ITVKTAAFLAFCLSLSEYSFGFCN. Topologically, residues 406–513 are extracellular; sequence FLITCDNVPV…PECTNKLQYL (108 aa). A Kazal-like domain is found at 433-488; that stretch reads NNVLADCNTRCSCLTKTWDPVCGDNGLAYMSACLAGCEKSVGTGTNMVFHNCSCIQ. Cystine bridges form between C439/C469, C445/C465, and C454/C486. N483 and N492 each carry an N-linked (GlcNAc...) asparagine glycan. A helical transmembrane segment spans residues 514-536; it reads LILSGFLSILYSFAAIPGYMVFL. Residues 537–545 lie on the Cytoplasmic side of the membrane; it reads RCIKSEEKS. A helical membrane pass occupies residues 546 to 571; it reads LGIGIHAFCIRVFAGIPAPIYFGALI. Topologically, residues 572–605 are extracellular; it reads DRTCLHWGTQKCGAPGACRMYDINSFRRIYLGMS. The chain crosses the membrane as a helical span at residues 606-623; it reads AALRGSSYLPAFVIVILT. At 624 to 670 the chain is on the cytoplasmic side; sequence RKFSLPGKINSSEMEIAEMKLTEKESQCTDVHRNPKFKNDGELKTKL.

This sequence belongs to the organo anion transporter (TC 2.A.60) family. In terms of tissue distribution, all isoforms are detected in kidney, and many are kidney specific. Isoforms 2 and 13 are also detected in liver. Isoforms 4 and 9/K4 are ubiquitous, but isoform 9/K13 is kidney specific. Isoforms 5 and 14 are detected in all tissues tested, with the exception of pancreas and spleen. Isoforms 11 and 15 are detected in kidney, pancreas and testis. Isoform 7 is detected in kidney, liver, testis and spleen.

The protein resides in the cell membrane. Functionally, mediates the Na(+)-independent transport of organic anions such as methotrexate, taurocholate, folate and prostaglandin E2. May contribute to renal secretion and/or reabsorption of hydrophobic anionic compounds. Mediates renal clearance of methotrexate from the blood. The sequence is that of Solute carrier organic anion transporter family member 1A3 (Slco1a3) from Rattus norvegicus (Rat).